The primary structure comprises 465 residues: Serine hydroxymethyltransferase (465 aa).

Lysine 241 is subject to N6-(pyridoxal phosphate)lysine.

It belongs to the SHMT family. In terms of assembly, homotetramer. The cofactor is pyridoxal 5'-phosphate. In terms of tissue distribution, highest expression in the ovary and testis. 6- to 7-fold lower expression in hemocyte, silk gland, midgut and fat body.

The catalysed reaction is (6R)-5,10-methylene-5,6,7,8-tetrahydrofolate + glycine + H2O = (6S)-5,6,7,8-tetrahydrofolate + L-serine. The protein operates within one-carbon metabolism; tetrahydrofolate interconversion. Functionally, interconversion of serine and glycine. This chain is Serine hydroxymethyltransferase (692975), found in Bombyx mori (Silk moth).